Here is a 362-residue protein sequence, read N- to C-terminus: Cytochrome P450 monooxygenase-like protein avaN (362 aa).

A helical transmembrane segment spans residues 3–23; it reads VILAIFIAAAGCLFSSWRIYW.

It belongs to the cytochrome P450 family.

Its subcellular location is the membrane. It participates in secondary metabolite biosynthesis. Its function is as follows. Cytochrome P450 monooxygenase-like protein; part of the cluster that mediates the biosynthesis of a highly modified cyclo-arginine-tryptophan dipeptide (cRW). The first step of the pathway is perfornmed by the arginine-containing cyclodipeptide synthase (RCPDS) avaA that acts as the scaffold-generating enzyme and is responsible for formation of the cyclo-Arg-Trp (cRW) diketopiperazine. AvaB then acts as a multifunctional flavoenzyme that is responsible for generating the cyclo-Arg-formylkynurenine DKP, which can be deformylated by avaC. AvaB then further catalyzes an additional N-oxidation followed by cyclization and dehydration. The next step is an N-acetylation of the guanidine group catalyzed by the arginine N-acetyltransferase avaD. The roles of the additional enzymes identified within the ava cluster still have to be determined. The chain is Cytochrome P450 monooxygenase-like protein avaN from Aspergillus versicolor.